The sequence spans 108 residues: ATP-dependent Clp protease adapter protein ClpS (108 aa).

Residues M1–E10 are compositionally biased toward basic and acidic residues. The interval M1 to K21 is disordered.

Belongs to the ClpS family. In terms of assembly, binds to the N-terminal domain of the chaperone ClpA.

Functionally, involved in the modulation of the specificity of the ClpAP-mediated ATP-dependent protein degradation. In Rhodospirillum centenum (strain ATCC 51521 / SW), this protein is ATP-dependent Clp protease adapter protein ClpS.